The chain runs to 745 residues: 1,4-alpha-glucan branching enzyme GlgB (745 aa).

Asp416 serves as the catalytic Nucleophile. Glu469 (proton donor) is an active-site residue.

Belongs to the glycosyl hydrolase 13 family. GlgB subfamily. As to quaternary structure, monomer.

It carries out the reaction Transfers a segment of a (1-&gt;4)-alpha-D-glucan chain to a primary hydroxy group in a similar glucan chain.. It participates in glycan biosynthesis; glycogen biosynthesis. Functionally, catalyzes the formation of the alpha-1,6-glucosidic linkages in glycogen by scission of a 1,4-alpha-linked oligosaccharide from growing alpha-1,4-glucan chains and the subsequent attachment of the oligosaccharide to the alpha-1,6 position. In Shewanella sp. (strain W3-18-1), this protein is 1,4-alpha-glucan branching enzyme GlgB.